A 259-amino-acid polypeptide reads, in one-letter code: Short-chain dehydrogenase reductase 5 (259 aa).

An NAD(+)-binding site is contributed by Ile-12–Val-36. Ser-144 lines the substrate pocket. Tyr-157 acts as the Proton acceptor in catalysis.

It belongs to the short-chain dehydrogenases/reductases (SDR) family.

The sequence is that of Short-chain dehydrogenase reductase 5 (SDR5) from Arabidopsis thaliana (Mouse-ear cress).